A 498-amino-acid chain; its full sequence is ATP synthase subunit beta, chloroplastic (498 aa).

G172–T179 contacts ATP.

This sequence belongs to the ATPase alpha/beta chains family. In terms of assembly, F-type ATPases have 2 components, CF(1) - the catalytic core - and CF(0) - the membrane proton channel. CF(1) has five subunits: alpha(3), beta(3), gamma(1), delta(1), epsilon(1). CF(0) has four main subunits: a(1), b(1), b'(1) and c(9-12).

The protein localises to the plastid. Its subcellular location is the chloroplast thylakoid membrane. It catalyses the reaction ATP + H2O + 4 H(+)(in) = ADP + phosphate + 5 H(+)(out). Its function is as follows. Produces ATP from ADP in the presence of a proton gradient across the membrane. The catalytic sites are hosted primarily by the beta subunits. This Spinacia oleracea (Spinach) protein is ATP synthase subunit beta, chloroplastic.